The primary structure comprises 555 residues: Glutamine--tRNA ligase (555 aa).

Residues 34 to 44 (PEPNGYLHIGH) carry the 'HIGH' region motif. ATP is bound by residues 35–37 (EPN) and 41–47 (HIGHAKS). L-glutamine-binding residues include Asp-67 and Tyr-212. ATP-binding positions include Thr-231, 261–262 (RL), and 269–271 (MSK). The 'KMSKS' region motif lies at 268 to 272 (VMSKR).

This sequence belongs to the class-I aminoacyl-tRNA synthetase family. As to quaternary structure, monomer.

The protein resides in the cytoplasm. The enzyme catalyses tRNA(Gln) + L-glutamine + ATP = L-glutaminyl-tRNA(Gln) + AMP + diphosphate. In Proteus mirabilis (strain HI4320), this protein is Glutamine--tRNA ligase.